Here is a 227-residue protein sequence, read N- to C-terminus: Neuromodulin (227 aa).

The segment at 1 to 227 (MLCCMRRTKQ…EDPEADQEHA (227 aa)) is disordered. 2 S-palmitoyl cysteine lipidation sites follow: Cys-3 and Cys-4. Positions 9–32 (KQVEKNDEDQKIEQDGVKPEDKAH) are enriched in basic and acidic residues. Residues 31-60 (AHKAATKIQASFRGHITRKKLKGEKKGDAP) enclose the IQ domain. A Phosphoserine; by PHK modification is found at Ser-41. Over residues 54 to 84 (EKKGDAPAAEAEAKEKDDAPVADGVEKKEGD) the composition is skewed to basic and acidic residues. A compositionally biased stretch (low complexity) spans 85–97 (GSATTDAAPATSP). 2 positions are modified to phosphoserine: Ser-86 and Ser-96. Basic and acidic residues predominate over residues 98–127 (KAEEPSKAGDAPSEEKKGEGDAAPSEEKAG). Over residues 128 to 139 (SAETESAAKATT) the composition is skewed to low complexity. The residue at position 138 (Thr-138) is a Phosphothreonine. A phosphoserine mark is found at Ser-142, Ser-144, and Ser-145. Residues 146-158 (KAEDGPAKEEPKQ) show a composition bias toward basic and acidic residues. Over residues 159–193 (ADVPAAVTDAAATTPAAEDAATKAAQPPTETAESS) the composition is skewed to low complexity. At Thr-172 the chain carries Phosphothreonine. Phosphoserine; by CK2 occurs at positions 192 and 193. A compositionally biased stretch (basic and acidic residues) spans 202–215 (VDEAKPKESARQDE). Positions 216 to 227 (GKEDPEADQEHA) are enriched in acidic residues.

Belongs to the neuromodulin family. As to quaternary structure, identified in a complex containing FGFR4, NCAM1, CDH2, PLCG1, FRS2, SRC, SHC1, GAP43 and CTTN. Interacts (via IQ domain) with calmodulin. Binds calmodulin with a greater affinity in the absence of Ca(2+) than in its presence. Post-translationally, phosphorylated. Phosphorylation of this protein by a protein kinase C is specifically correlated with certain forms of synaptic plasticity. Palmitoylated by ZDHHC3. Palmitoylation is regulated by ARF6 and is essential for plasma membrane association and axonal and dendritic filopodia induction. Deacylated by LYPLA2. Expressed in the hippocampus (at protein level). Expressed in the dorsal root ganglion and the spinal cord (at protein level).

Its subcellular location is the cell membrane. It is found in the cell projection. It localises to the growth cone membrane. The protein localises to the synapse. The protein resides in the filopodium membrane. Its subcellular location is the perikaryon. It is found in the dendrite. It localises to the axon. The protein localises to the cytoplasm. In terms of biological role, this protein is associated with nerve growth. It is a major component of the motile 'growth cones' that form the tips of elongating axons. Plays a role in axonal and dendritic filopodia induction. The protein is Neuromodulin (Gap43) of Mus musculus (Mouse).